The chain runs to 360 residues: Hereditary hemochromatosis protein homolog (360 aa).

The first 25 residues, 1–25, serve as a signal peptide directing secretion; sequence MDRSAGLPVRLLLLLLLLLLWSVAP. An alpha-1 region spans residues 26 to 127; that stretch reads QALRPGSHSL…KVTKLRVVPE (102 aa). The Extracellular portion of the chain corresponds to 26 to 319; the sequence is QALRPGSHSL…WEPSRSQDMI (294 aa). 4 N-linked (GlcNAc...) asparagine glycosylation sites follow: asparagine 115, asparagine 143, asparagine 167, and asparagine 247. Residues 128 to 218 form an alpha-2 region; that stretch reads SHILQVILGC…ELQRGVLGQQ (91 aa). Disulfide bonds link cysteine 137–cysteine 200 and cysteine 238–cysteine 295. The interval 219 to 310 is alpha-3; the sequence is VPTLVKVTRH…GLDQPLTATW (92 aa). An Ig-like C1-type domain is found at 220-309; sequence PTLVKVTRHW…PGLDQPLTAT (90 aa). Residues 311–319 form a connecting peptide region; the sequence is EPSRSQDMI. The chain crosses the membrane as a helical span at residues 320–340; that stretch reads IGIISGITICAIFFVGILILV. Residues 341 to 360 are Cytoplasmic-facing; the sequence is LRKRKVSGGTMGDYVLTECE.

It belongs to the MHC class I family. Binds TFR through the extracellular domain in a pH-dependent manner.

The protein resides in the cell membrane. In terms of biological role, binds to transferrin receptor (TFR) and reduces its affinity for iron-loaded transferrin. The chain is Hereditary hemochromatosis protein homolog (Hfe) from Rattus norvegicus (Rat).